Reading from the N-terminus, the 217-residue chain is MAGRTTFLREYKLVVVGGGGVGKSALTIQFIQSHFVDEYDPTIEDSYRKQCVIDDEVALLDVLDTAGQEEYGAMREQYMRTGEGFLLVYSITSRNSFEEISTFHQQILRVKDQDTFPVVVVANKCDLEYERQVGMNEGRDLARHFGCKFVETSAKVRINVDQAFQDLVREIRKYNKEQQTTGRMMTGGGGGGPPGTYAGKDPNDEGAGGCCGGCVVL.

17 to 24 (GGGGVGKS) serves as a coordination point for GTP. An Effector region motif is present at residues 39–47 (YDPTIEDSY). GTP is bound by residues 64–68 (DTAGQ) and 123–126 (NKCD). The disordered stretch occupies residues 181–200 (TGRMMTGGGGGGPPGTYAGK). Over residues 185–194 (MTGGGGGGPP) the composition is skewed to gly residues. 2 S-palmitoyl cysteine lipidation sites follow: Cys210 and Cys211. Cys214 carries the cysteine methyl ester modification. Residue Cys214 is the site of S-geranylgeranyl cysteine attachment. A propeptide spans 215-217 (VVL) (removed in mature form).

The protein belongs to the small GTPase superfamily. Ras family.

It localises to the cell membrane. It catalyses the reaction GTP + H2O = GDP + phosphate + H(+). With respect to regulation, alternates between an inactive form bound to GDP and an active form bound to GTP. Activated by a guanine nucleotide-exchange factor (GEF) and inactivated by a GTPase-activating protein (GAP). The polypeptide is Ras-like protein (Lentinula edodes (Shiitake mushroom)).